The following is a 246-amino-acid chain: Homeobox protein Hox-B4a (246 aa).

The segment at 23 to 125 is disordered; that stretch reads YSQSDYLPSH…SQNTSTVSSR (103 aa). 2 stretches are compositionally biased toward polar residues: residues 39–48 and 112–123; these read AQRQDPSFQH and QTPTSQNTSTVS. The short motif at 130 to 135 is the Antp-type hexapeptide element; sequence VYPWMK. Positions 151 to 210 form a DNA-binding region, homeobox; the sequence is PKRSRTAYTRQQVLELEKEFHYNRYLTRRRRVEIAHTLCLSERQIKIWFQNRRMKWKKDH. Residues 210-246 form a disordered region; sequence HKLPNTKIRSNSASTNSSGCPTLCSNQSRASGPPPSL. Over residues 216-239 the composition is skewed to polar residues; that stretch reads KIRSNSASTNSSGCPTLCSNQSRA.

This sequence belongs to the Antp homeobox family. Deformed subfamily.

Its subcellular location is the nucleus. In terms of biological role, sequence-specific transcription factor which is part of a developmental regulatory system that provides cells with specific positional identities on the anterior-posterior axis. The protein is Homeobox protein Hox-B4a (hoxb4a) of Danio rerio (Zebrafish).